A 284-amino-acid chain; its full sequence is Hypoxanthine-guanine phosphoribosyltransferase (284 aa).

GMP contacts are provided by residues K129, 194–202 (EDIIDTGKT), K226, and D253. D198 functions as the Proton acceptor in the catalytic mechanism. Mg(2+) is bound at residue D253.

This sequence belongs to the purine/pyrimidine phosphoribosyltransferase family. As to quaternary structure, homotetramer. It depends on Mg(2+) as a cofactor.

It is found in the cytoplasm. It carries out the reaction IMP + diphosphate = hypoxanthine + 5-phospho-alpha-D-ribose 1-diphosphate. The catalysed reaction is GMP + diphosphate = guanine + 5-phospho-alpha-D-ribose 1-diphosphate. Its pathway is purine metabolism; IMP biosynthesis via salvage pathway; IMP from hypoxanthine: step 1/1. In terms of biological role, converts guanine to guanosine monophosphate, and hypoxanthine to inosine monophosphate. Transfers the 5-phosphoribosyl group from 5-phosphoribosylpyrophosphate onto the purine. Plays a central role in the generation of purine nucleotides through the purine salvage pathway. The protein is Hypoxanthine-guanine phosphoribosyltransferase (HGPRT) of Schistosoma mansoni (Blood fluke).